Consider the following 487-residue polypeptide: Adenylosuccinate synthetase, chloroplastic (487 aa).

The N-terminal 46 residues, 1 to 46, are a transit peptide targeting the chloroplast; that stretch reads MSLSTVNHAAAAAAAAGSGKSFSAAAPAAPSVRLPRTRAPAAAAVS. Residues 74 to 80 and 102 to 104 contribute to the GTP site; these read GDEGKGK and GHT. Residue Asp75 is the Proton acceptor of the active site. Residues Asp75 and Gly102 each coordinate Mg(2+). Residues 75-78, 100-103, Thr192, Arg206, Gln286, Thr301, and Arg365 contribute to the IMP site; these read DEGK and NAGH. His103 (proton donor) is an active-site residue. 361–367 is a binding site for substrate; the sequence is TTTGRPR. Residues Arg367, 393–395, and 476–478 contribute to the GTP site; these read KLD and GVG.

It belongs to the adenylosuccinate synthetase family. In terms of assembly, homodimer. Mg(2+) serves as cofactor.

It localises to the plastid. Its subcellular location is the chloroplast. It catalyses the reaction IMP + L-aspartate + GTP = N(6)-(1,2-dicarboxyethyl)-AMP + GDP + phosphate + 2 H(+). Its pathway is purine metabolism; AMP biosynthesis via de novo pathway; AMP from IMP: step 1/2. In terms of biological role, plays an important role in the de novo pathway and in the salvage pathway of purine nucleotide biosynthesis. Catalyzes the first committed step in the biosynthesis of AMP from IMP. The protein is Adenylosuccinate synthetase, chloroplastic of Oryza sativa subsp. indica (Rice).